We begin with the raw amino-acid sequence, 109 residues long: Probable cytochrome b-c1 complex subunit 7 (109 aa).

Belongs to the UQCRB/QCR7 family. In terms of assembly, component of the ubiquinol-cytochrome c oxidoreductase (cytochrome b-c1 complex, complex III, CIII), a multisubunit enzyme composed of 3 respiratory subunits cytochrome b, cytochrome c1 and Rieske protein, 2 core protein subunits, and additional low-molecular weight protein subunits. The complex exists as an obligatory dimer and forms supercomplexes (SCs) in the inner mitochondrial membrane with cytochrome c oxidase (complex IV, CIV).

It is found in the mitochondrion inner membrane. Its function is as follows. Component of the ubiquinol-cytochrome c oxidoreductase, a multisubunit transmembrane complex that is part of the mitochondrial electron transport chain which drives oxidative phosphorylation. The respiratory chain contains 3 multisubunit complexes succinate dehydrogenase (complex II, CII), ubiquinol-cytochrome c oxidoreductase (cytochrome b-c1 complex, complex III, CIII) and cytochrome c oxidase (complex IV, CIV), that cooperate to transfer electrons derived from NADH and succinate to molecular oxygen, creating an electrochemical gradient over the inner membrane that drives transmembrane transport and the ATP synthase. The cytochrome b-c1 complex catalyzes electron transfer from ubiquinol to cytochrome c, linking this redox reaction to translocation of protons across the mitochondrial inner membrane, with protons being carried across the membrane as hydrogens on the quinol. In the process called Q cycle, 2 protons are consumed from the matrix, 4 protons are released into the intermembrane space and 2 electrons are passed to cytochrome c. The chain is Probable cytochrome b-c1 complex subunit 7 from Dictyostelium discoideum (Social amoeba).